A 703-amino-acid polypeptide reads, in one-letter code: ABC transporter G family member 11 (703 aa).

Residues 50–293 enclose the ABC transporter domain; it reads LTWQDLTVMV…FAQAGFPCPA (244 aa). 87 to 94 contacts ATP; sequence GPSGSGKS. Positions 382–594 constitute an ABC transmembrane type-2 domain; the sequence is LQTYTLTKRS…ALQGQYQNDL (213 aa). N394 carries an N-linked (GlcNAc...) asparagine glycan. The next 6 helical transmembrane spans lie at 406–426, 436–456, 485–505, 513–533, 540–560, and 628–648; these read LLIYILVTVCIGTIYLNVGTS, CASFVFGFVTFMSIGGFPSFV, TPFLIMITFISGTICYFMVGL, LFFVLCLYASVTVVESLMMAI, FLMGIIIGAGIQGIFMLVSGF, and INLSVILSMIIIYRIIFFIMI. N-linked (GlcNAc...) asparagine glycosylation is found at N671 and N675. S688 carries the post-translational modification Phosphoserine.

This sequence belongs to the ABC transporter superfamily. ABCG family. Eye pigment precursor importer (TC 3.A.1.204) subfamily. Homodimer. Forms heterodimers with ABCG9, ABCG12 and ABCG14 in epidermal cells. As to expression, expressed in seedlings, roots, stems, leaves, flowers, and siliques, mostly in epidermis, trichomes, vasculatures and developing tissues. Follows an uniparental maternal expression in the seed, thus being the product of a maternally expressed imprinted gene. Accumulates in the phloem. Transcripts seem to be transported from shoots to roots.

It localises to the cell membrane. Its function is as follows. Required for the cuticle, root suberin and pollen coat development by controlling cutin and maybe wax transport to the extracellular matrix. Involved in developmental plasticity and stress responses. Together with ABCG9 and ABCG14, required for vascular development by regulating lipid/sterol homeostasis. May be a transporter of lignin precursors during tracheary element differentiation. The sequence is that of ABC transporter G family member 11 from Arabidopsis thaliana (Mouse-ear cress).